A 362-amino-acid chain; its full sequence is Holliday junction branch migration complex subunit RuvB (362 aa).

A disordered region spans residues 1 to 27; it reads MANIEKTEFHVPAPVSAAGNQKSSLGN. The segment at 13–206 is large ATPase domain (RuvB-L); the sequence is APVSAAGNQK…FGFTAQMEFY (194 aa). ATP contacts are provided by residues Leu45, Arg46, Gly87, Lys90, Thr91, Thr92, 153–155, Arg196, Tyr206, and Arg243; that span reads EDF. Mg(2+) is bound at residue Thr91. Positions 207–277 are small ATPAse domain (RuvB-S); sequence EVEDLTKVVV…AAQAALVVFD (71 aa). The segment at 280–362 is head domain (RuvB-H); it reads EMGLDRLDRA…EPPEGIIGSL (83 aa). Residues Arg335 and Arg340 each contribute to the DNA site.

It belongs to the RuvB family. As to quaternary structure, homohexamer. Forms an RuvA(8)-RuvB(12)-Holliday junction (HJ) complex. HJ DNA is sandwiched between 2 RuvA tetramers; dsDNA enters through RuvA and exits via RuvB. An RuvB hexamer assembles on each DNA strand where it exits the tetramer. Each RuvB hexamer is contacted by two RuvA subunits (via domain III) on 2 adjacent RuvB subunits; this complex drives branch migration. In the full resolvosome a probable DNA-RuvA(4)-RuvB(12)-RuvC(2) complex forms which resolves the HJ.

The protein resides in the cytoplasm. The enzyme catalyses ATP + H2O = ADP + phosphate + H(+). In terms of biological role, the RuvA-RuvB-RuvC complex processes Holliday junction (HJ) DNA during genetic recombination and DNA repair, while the RuvA-RuvB complex plays an important role in the rescue of blocked DNA replication forks via replication fork reversal (RFR). RuvA specifically binds to HJ cruciform DNA, conferring on it an open structure. The RuvB hexamer acts as an ATP-dependent pump, pulling dsDNA into and through the RuvAB complex. RuvB forms 2 homohexamers on either side of HJ DNA bound by 1 or 2 RuvA tetramers; 4 subunits per hexamer contact DNA at a time. Coordinated motions by a converter formed by DNA-disengaged RuvB subunits stimulates ATP hydrolysis and nucleotide exchange. Immobilization of the converter enables RuvB to convert the ATP-contained energy into a lever motion, pulling 2 nucleotides of DNA out of the RuvA tetramer per ATP hydrolyzed, thus driving DNA branch migration. The RuvB motors rotate together with the DNA substrate, which together with the progressing nucleotide cycle form the mechanistic basis for DNA recombination by continuous HJ branch migration. Branch migration allows RuvC to scan DNA until it finds its consensus sequence, where it cleaves and resolves cruciform DNA. This chain is Holliday junction branch migration complex subunit RuvB, found in Corynebacterium diphtheriae (strain ATCC 700971 / NCTC 13129 / Biotype gravis).